Here is a 234-residue protein sequence, read N- to C-terminus: DEAD-box ATP-dependent RNA helicase 3 (234 aa).

The Q motif signature appears at 120–148; it reads LAVSRLGLPQKLVETLEKRGITKLFPIQR. Residues 151–234 enclose the Helicase ATP-binding domain; it reads LVPALEGRDI…RTVCVYGGVS (84 aa). 164-171 contacts ATP; the sequence is AKTGTGKT.

This sequence belongs to the DEAD box helicase family. DDX21/DDX50 subfamily.

This Helianthus annuus (Common sunflower) protein is DEAD-box ATP-dependent RNA helicase 3.